The sequence spans 272 residues: MTDMYSLFVAFVLGVVEGLTEFLPVSSTGHMIIVGELLGFTGDKAKTFEVIIQLGSILAVVVVFWRRLFGLIGIHFGKVPHEGKTNGHLTLGHILLAMIPAVGLGLAFHDVIKSLFNPQSVMYALVAGGLLLLAAEWFKPKNPKATGLDDITYRQAFAIGCFQCLALWPGFSRSGATISGGMLVGVNRYAASEFSFILAVPMMLGASGLDLYKSLHFLSWGDLPMFAVGFITAFVVALIAIKTFLSLIKRISFVPFAIYRFIVAAAVYWVFM.

The next 8 membrane-spanning stretches (helical) occupy residues 5–25 (YSLF…FLPV), 45–65 (AKTF…VVFW), 88–108 (HLTL…GLAF), 115–135 (LFNP…LLAA), 152–171 (TYRQ…WPGF), 189–209 (YAAS…ASGL), 221–241 (GDLP…LIAI), and 251–271 (ISFV…YWVF).

The protein belongs to the UppP family.

The protein resides in the cell inner membrane. It carries out the reaction di-trans,octa-cis-undecaprenyl diphosphate + H2O = di-trans,octa-cis-undecaprenyl phosphate + phosphate + H(+). In terms of biological role, catalyzes the dephosphorylation of undecaprenyl diphosphate (UPP). Confers resistance to bacitracin. The protein is Undecaprenyl-diphosphatase of Yersinia enterocolitica serotype O:8 / biotype 1B (strain NCTC 13174 / 8081).